Reading from the N-terminus, the 326-residue chain is Phospho-N-acetylmuramoyl-pentapeptide-transferase (326 aa).

10 consecutive transmembrane segments (helical) span residues 4 to 24 (IWVA…LVIP), 49 to 69 (TPTM…FLLI), 74 to 94 (GLIV…DDYI), 109 to 129 (KLLG…FEAG), 151 to 171 (LGWW…SNAV), 179 to 199 (GLAA…ALAA), 203 to 223 (GVAA…FFNF), 228 to 248 (VFMG…AAVV), 254 to 274 (LFLI…IQVI), and 303 to 323 (VVIT…AGLY).

This sequence belongs to the glycosyltransferase 4 family. MraY subfamily. The cofactor is Mg(2+).

It localises to the cell membrane. The enzyme catalyses UDP-N-acetyl-alpha-D-muramoyl-L-alanyl-gamma-D-glutamyl-meso-2,6-diaminopimeloyl-D-alanyl-D-alanine + di-trans,octa-cis-undecaprenyl phosphate = di-trans,octa-cis-undecaprenyl diphospho-N-acetyl-alpha-D-muramoyl-L-alanyl-D-glutamyl-meso-2,6-diaminopimeloyl-D-alanyl-D-alanine + UMP. The protein operates within cell wall biogenesis; peptidoglycan biosynthesis. In terms of biological role, catalyzes the initial step of the lipid cycle reactions in the biosynthesis of the cell wall peptidoglycan: transfers peptidoglycan precursor phospho-MurNAc-pentapeptide from UDP-MurNAc-pentapeptide onto the lipid carrier undecaprenyl phosphate, yielding undecaprenyl-pyrophosphoryl-MurNAc-pentapeptide, known as lipid I. In Pelotomaculum thermopropionicum (strain DSM 13744 / JCM 10971 / SI), this protein is Phospho-N-acetylmuramoyl-pentapeptide-transferase.